A 410-amino-acid polypeptide reads, in one-letter code: Toluene 1,2-dioxygenase system ferredoxin--NAD(+) reductase component (410 aa).

4-35 provides a ligand contact to FAD; the sequence is HVAIIGNGVGGFTTAQALRAEGFEGRISLIGD. 145 to 173 provides a ligand contact to NAD(+); the sequence is RLLIVGGGLIGCEVATTARKLGLSVTILE.

It belongs to the bacterial ring-hydroxylating dioxygenase ferredoxin reductase family. As to quaternary structure, this dioxygenase system consists of four proteins: the two subunits of the hydroxylase component (todC1 and todC2), a ferredoxin (TodB) and a ferredoxin reductase (TodA). Requires FAD as cofactor.

It carries out the reaction 2 reduced [2Fe-2S]-[ferredoxin] + NAD(+) + H(+) = 2 oxidized [2Fe-2S]-[ferredoxin] + NADH. It participates in xenobiotic degradation; toluene degradation. Part of the electron transfer component of toluene 1,2-dioxygenase, transfers electrons from ferredoxin (TodB) to NADH. The chain is Toluene 1,2-dioxygenase system ferredoxin--NAD(+) reductase component (todA) from Pseudomonas putida (strain ATCC 700007 / DSM 6899 / JCM 31910 / BCRC 17059 / LMG 24140 / F1).